Consider the following 159-residue polypeptide: Ribosomal RNA large subunit methyltransferase H (159 aa).

S-adenosyl-L-methionine is bound by residues Leu76, Gly107, and 126–131 (ISSLTL).

Belongs to the RNA methyltransferase RlmH family. Homodimer.

The protein localises to the cytoplasm. It catalyses the reaction pseudouridine(1915) in 23S rRNA + S-adenosyl-L-methionine = N(3)-methylpseudouridine(1915) in 23S rRNA + S-adenosyl-L-homocysteine + H(+). In terms of biological role, specifically methylates the pseudouridine at position 1915 (m3Psi1915) in 23S rRNA. The chain is Ribosomal RNA large subunit methyltransferase H from Cupriavidus metallidurans (strain ATCC 43123 / DSM 2839 / NBRC 102507 / CH34) (Ralstonia metallidurans).